Reading from the N-terminus, the 137-residue chain is Ribosome-binding factor A (137 aa).

The protein belongs to the RbfA family. Monomer. Binds 30S ribosomal subunits, but not 50S ribosomal subunits or 70S ribosomes.

Its subcellular location is the cytoplasm. One of several proteins that assist in the late maturation steps of the functional core of the 30S ribosomal subunit. Associates with free 30S ribosomal subunits (but not with 30S subunits that are part of 70S ribosomes or polysomes). Required for efficient processing of 16S rRNA. May interact with the 5'-terminal helix region of 16S rRNA. In Shewanella amazonensis (strain ATCC BAA-1098 / SB2B), this protein is Ribosome-binding factor A.